Here is a 433-residue protein sequence, read N- to C-terminus: Adenylosuccinate synthetase (433 aa).

Residues 11-17 and 39-41 each bind GTP; these read GDEGKGK and GHT. Asp-12 serves as the catalytic Proton acceptor. Mg(2+)-binding residues include Asp-12 and Gly-39. IMP contacts are provided by residues 12–15, 37–40, Thr-134, Arg-148, Asn-230, Thr-245, and Arg-309; these read DEGK and NAGH. His-40 serves as the catalytic Proton donor. 305 to 311 lines the substrate pocket; sequence VTTGRKR. Residues Arg-311, 337–339, and 419–421 each bind GTP; these read KLD and GTG.

It belongs to the adenylosuccinate synthetase family. As to quaternary structure, homodimer. It depends on Mg(2+) as a cofactor.

It is found in the cytoplasm. The catalysed reaction is IMP + L-aspartate + GTP = N(6)-(1,2-dicarboxyethyl)-AMP + GDP + phosphate + 2 H(+). Its pathway is purine metabolism; AMP biosynthesis via de novo pathway; AMP from IMP: step 1/2. Plays an important role in the de novo pathway and in the salvage pathway of purine nucleotide biosynthesis. Catalyzes the first committed step in the biosynthesis of AMP from IMP. The sequence is that of Adenylosuccinate synthetase from Saccharomyces cerevisiae (strain YJM789) (Baker's yeast).